Reading from the N-terminus, the 411-residue chain is Bifunctional protein GlmU (411 aa).

The pyrophosphorylase stretch occupies residues Met1 to Lys204. Residues Leu6 to Gly9, Gln74, and Gly79 each bind UTP. Thr80, Gly130, Asn142, and Asn158 together coordinate N-acetyl-alpha-D-glucosamine 1-phosphate. A linker region spans residues Gly205 to Leu224. The tract at residues Asn225–Asn411 is N-acetyltransferase. The active-site Proton acceptor is the His308. The acetyl-CoA site is built by Ala384 and Lys401.

It in the N-terminal section; belongs to the N-acetylglucosamine-1-phosphate uridyltransferase family. This sequence in the C-terminal section; belongs to the transferase hexapeptide repeat family.

It carries out the reaction N-acetyl-alpha-D-glucosamine 1-phosphate + UTP + H(+) = UDP-N-acetyl-alpha-D-glucosamine + diphosphate. The enzyme catalyses alpha-D-glucosamine 1-phosphate + acetyl-CoA = N-acetyl-alpha-D-glucosamine 1-phosphate + CoA + H(+). The protein operates within nucleotide-sugar biosynthesis; UDP-N-acetyl-alpha-D-glucosamine biosynthesis; N-acetyl-alpha-D-glucosamine 1-phosphate from alpha-D-glucosamine 6-phosphate (route II): step 2/2. It functions in the pathway nucleotide-sugar biosynthesis; UDP-N-acetyl-alpha-D-glucosamine biosynthesis; UDP-N-acetyl-alpha-D-glucosamine from N-acetyl-alpha-D-glucosamine 1-phosphate: step 1/1. Functionally, catalyzes the last two sequential reactions in the de novo biosynthetic pathway for UDP-N-acetyl-glucosamine (UDP-GlcNAc). Responsible for the acetylation of GlcN-1-P to GlcNAc-1-P, and for the uridyl transfer from UTP to GlcNAc-1-P, to produce UDP-GlcNAc and pyrophosphate. The polypeptide is Bifunctional protein GlmU (Methanococcus maripaludis (strain DSM 14266 / JCM 13030 / NBRC 101832 / S2 / LL)).